We begin with the raw amino-acid sequence, 229 residues long: Prolactin (229 aa).

The N-terminal stretch at 1 to 30 (MDKKRSSLKGSLLLLLLLVSDLLLCKSVAS) is a signal peptide. Cys-34 and Cys-41 are disulfide-bonded. Ser-56 carries the phosphoserine modification. Asn-61 carries N-linked (GlcNAc...) asparagine; partial glycosylation. A phosphoserine mark is found at Ser-64 and Ser-120. Intrachain disulfides connect Cys-88–Cys-204 and Cys-221–Cys-229.

The protein belongs to the somatotropin/prolactin family. As to quaternary structure, interacts with PRLR.

It localises to the secreted. Its function is as follows. Prolactin acts primarily on the mammary gland by promoting lactation. The sequence is that of Prolactin (PRL) from Equus caballus (Horse).